We begin with the raw amino-acid sequence, 130 residues long: Glycine cleavage system H protein (130 aa).

One can recognise a Lipoyl-binding domain in the interval 24–106; sequence TLTIGITDHA…YGEGWIMRIR (83 aa). Lys-65 is subject to N6-lipoyllysine. A disordered region spans residues 111-130; the sequence is DDLEQLLDPEDYQDLVADEE.

Belongs to the GcvH family. The glycine cleavage system is composed of four proteins: P, T, L and H. Requires (R)-lipoate as cofactor.

Functionally, the glycine cleavage system catalyzes the degradation of glycine. The H protein shuttles the methylamine group of glycine from the P protein to the T protein. This is Glycine cleavage system H protein from Alkalilimnicola ehrlichii (strain ATCC BAA-1101 / DSM 17681 / MLHE-1).